The chain runs to 319 residues: MGLCKCPKRKVTNLFCYEHRVNVCEFCLVDNHPNCVVQSYLNWLTDQDYDPNCSLCHTTLTQGETIRLNCLHLLHWRCFDDWAASFPPTTAPAGYRCPCCSQEVFPPINEVSPLIEKLREQLKQSNWARNALGLPVLPELNRPVKNIAPIPPPPPPQVKHVSYDDSPAQKEIPIHHNRSETPATHLEMEDTASYSVSNSDVTFARKKNFASESSSDTRPLLRQDRDADNEENKYKRRPTIDWMRGLWRAKHGTGVPEDRTSGRKMAIFVMFLALLALITIITVLKRAGYNGEHSSDPMFDPMANPNIRVAVDDSRLPHL.

Residues methionine 1 to tryptophan 43 form a B box-type; degenerate zinc finger. An RING-type; atypical zinc finger spans residues cysteine 53–serine 101. The disordered stretch occupies residues glutamate 212 to asparagine 232. Residues proline 219 to asparagine 232 are compositionally biased toward basic and acidic residues. Residues lysine 264–leucine 284 traverse the membrane as a helical segment.

This sequence belongs to the ZFPL1 family.

The protein resides in the membrane. The chain is Zinc finger protein-like 1 homolog from Caenorhabditis briggsae.